A 161-amino-acid chain; its full sequence is RNA pyrophosphohydrolase (161 aa).

One can recognise a Nudix hydrolase domain in the interval 12-154 (PYRIGVGMVI…KRKLYKAVIN (143 aa)). The Nudix box signature appears at 46-67 (GGIILGETYSKAVLREMKEEIG).

This sequence belongs to the Nudix hydrolase family. RppH subfamily. The cofactor is a divalent metal cation.

Its function is as follows. Accelerates the degradation of transcripts by removing pyrophosphate from the 5'-end of triphosphorylated RNA, leading to a more labile monophosphorylated state that can stimulate subsequent ribonuclease cleavage. The chain is RNA pyrophosphohydrolase from Orientia tsutsugamushi (strain Boryong) (Rickettsia tsutsugamushi).